We begin with the raw amino-acid sequence, 236 residues long: Small ribosomal subunit protein uS3 (236 aa).

The KH type-2 domain occupies 39–107 (IREFLTEELK…DTSLNIVEVR (69 aa)). The interval 214–236 (ASERRAVEGDNQGSSSNRRRENA) is disordered.

The protein belongs to the universal ribosomal protein uS3 family. In terms of assembly, part of the 30S ribosomal subunit. Forms a tight complex with proteins S10 and S14.

In terms of biological role, binds the lower part of the 30S subunit head. Binds mRNA in the 70S ribosome, positioning it for translation. In Brucella melitensis biotype 1 (strain ATCC 23456 / CCUG 17765 / NCTC 10094 / 16M), this protein is Small ribosomal subunit protein uS3.